The following is a 411-amino-acid chain: Anaerobic nitric oxide reductase flavorubredoxin homolog (411 aa).

A zinc metallo-hydrolase region spans residues 30 to 210 (LRGSSYNSYL…PFSRLVTPKI (181 aa)). Residues H79, E81, D83, H147, D166, H227, C360, C363, C393, and C396 each contribute to the Fe cation site. The 52-residue stretch at 355–406 (GPRMQCSVCQWIYDPAKGEPMQDVAPGTPWSEVPDNFLCPECSLGKDVFDEL) folds into the Rubredoxin-like domain.

It in the N-terminal section; belongs to the zinc metallo-hydrolase group 3 family. Homotetramer. Fe cation serves as cofactor.

It is found in the cytoplasm. The protein operates within nitrogen metabolism; nitric oxide reduction. Anaerobic nitric oxide reductase; uses NADH to detoxify nitric oxide (NO), protecting several 4Fe-4S NO-sensitive enzymes. Has at least 2 reductase partners, only one of which (NorW, flavorubredoxin reductase) has been identified. NO probably binds to the di-iron center. Also able to function as an aerobic oxygen reductase. This Escherichia coli O157:H7 protein is Anaerobic nitric oxide reductase flavorubredoxin homolog.